The following is a 748-amino-acid chain: Polyribonucleotide nucleotidyltransferase (748 aa).

D522 and D528 together coordinate Mg(2+). The 60-residue stretch at 588–647 (PRVTTIRVPVDKIGEVIGPKGKIINAITEETGAQISIEDDGTVFVGATDGPSAQAAIDRI) folds into the KH domain. Positions 659–728 (GERFLGTVVK…KRGKISLVLV (70 aa)) constitute an S1 motif domain.

Belongs to the polyribonucleotide nucleotidyltransferase family. Requires Mg(2+) as cofactor.

It is found in the cytoplasm. The enzyme catalyses RNA(n+1) + phosphate = RNA(n) + a ribonucleoside 5'-diphosphate. Functionally, involved in mRNA degradation. Catalyzes the phosphorolysis of single-stranded polyribonucleotides processively in the 3'- to 5'-direction. In Mycobacterium avium (strain 104), this protein is Polyribonucleotide nucleotidyltransferase.